Reading from the N-terminus, the 151-residue chain is Ribosome maturation factor RimP (151 aa).

Belongs to the RimP family.

It localises to the cytoplasm. Required for maturation of 30S ribosomal subunits. This is Ribosome maturation factor RimP from Nitrosococcus oceani (strain ATCC 19707 / BCRC 17464 / JCM 30415 / NCIMB 11848 / C-107).